The chain runs to 828 residues: Translation initiation factor IF-2 (828 aa).

Disordered stretches follow at residues 48–76 and 112–137; these read SYSG…SEEF and ASQE…EPKI. A compositionally biased stretch (polar residues) spans 49-58; the sequence is YSGSTTTLSL. The span at 65–74 shows a compositional bias: low complexity; it reads LETGSSSGSE. Positions 116–126 are enriched in acidic residues; that stretch reads DPIEVEQEESS. Over residues 127-137 the composition is skewed to basic and acidic residues; it reads DTNKVKEEPKI. Positions 326 to 496 constitute a tr-type G domain; the sequence is SRAPVVTVMG…LLIAEMQNLK (171 aa). A G1 region spans residues 335–342; that stretch reads GHVDHGKT. Position 335 to 342 (335 to 342) interacts with GTP; sequence GHVDHGKT. Residues 360 to 364 are G2; that stretch reads GITQH. Positions 382–385 are G3; sequence DTPG. Residues 382–386 and 436–439 contribute to the GTP site; these read DTPGH and NKID. The segment at 436–439 is G4; sequence NKID. Positions 472–474 are G5; sequence SAL.

It belongs to the TRAFAC class translation factor GTPase superfamily. Classic translation factor GTPase family. IF-2 subfamily.

The protein localises to the cytoplasm. Its function is as follows. One of the essential components for the initiation of protein synthesis. Protects formylmethionyl-tRNA from spontaneous hydrolysis and promotes its binding to the 30S ribosomal subunits. Also involved in the hydrolysis of GTP during the formation of the 70S ribosomal complex. The sequence is that of Translation initiation factor IF-2 from Rickettsia bellii (strain RML369-C).